The sequence spans 274 residues: Acetyl-coenzyme A carboxylase carboxyl transferase subunit alpha (274 aa).

Positions 1–245 constitute a CoA carboxyltransferase C-terminal domain; the sequence is MENSQELTPW…RENLKKAIEG (245 aa).

The protein belongs to the AccA family. In terms of assembly, acetyl-CoA carboxylase is a heterohexamer composed of biotin carboxyl carrier protein (AccB), biotin carboxylase (AccC) and two subunits each of ACCase subunit alpha (AccA) and ACCase subunit beta (AccD).

The protein resides in the cytoplasm. The enzyme catalyses N(6)-carboxybiotinyl-L-lysyl-[protein] + acetyl-CoA = N(6)-biotinyl-L-lysyl-[protein] + malonyl-CoA. Its pathway is lipid metabolism; malonyl-CoA biosynthesis; malonyl-CoA from acetyl-CoA: step 1/1. Component of the acetyl coenzyme A carboxylase (ACC) complex. First, biotin carboxylase catalyzes the carboxylation of biotin on its carrier protein (BCCP) and then the CO(2) group is transferred by the carboxyltransferase to acetyl-CoA to form malonyl-CoA. This chain is Acetyl-coenzyme A carboxylase carboxyl transferase subunit alpha, found in Clostridium acetobutylicum (strain ATCC 824 / DSM 792 / JCM 1419 / IAM 19013 / LMG 5710 / NBRC 13948 / NRRL B-527 / VKM B-1787 / 2291 / W).